A 285-amino-acid polypeptide reads, in one-letter code: Glutamate racemase (285 aa).

Substrate is bound by residues 28–29 (DS) and 60–61 (YG). Cysteine 92 serves as the catalytic Proton donor/acceptor. 93-94 (NT) serves as a coordination point for substrate. The Proton donor/acceptor role is filled by cysteine 204. A substrate-binding site is contributed by 205-206 (TH).

The protein belongs to the aspartate/glutamate racemases family.

The enzyme catalyses L-glutamate = D-glutamate. Its pathway is cell wall biogenesis; peptidoglycan biosynthesis. Functionally, provides the (R)-glutamate required for cell wall biosynthesis. This is Glutamate racemase from Shigella flexneri serotype 5b (strain 8401).